The sequence spans 714 residues: Polyribonucleotide nucleotidyltransferase (714 aa).

Positions 488 and 494 each coordinate Mg(2+). The KH domain maps to 555–614 (PRIEVMNIPTDKIRDVIGSGGKVIREIVEKTGAKINIEDDGTVKIASSNGKEIEAAKKWI). In terms of domain architecture, S1 motif spans 624–692 (GEIYEGTVVK…ERGKVRLSMK (69 aa)).

It belongs to the polyribonucleotide nucleotidyltransferase family. Requires Mg(2+) as cofactor.

The protein resides in the cytoplasm. It carries out the reaction RNA(n+1) + phosphate = RNA(n) + a ribonucleoside 5'-diphosphate. Its function is as follows. Involved in mRNA degradation. Catalyzes the phosphorolysis of single-stranded polyribonucleotides processively in the 3'- to 5'-direction. This chain is Polyribonucleotide nucleotidyltransferase, found in Brucella melitensis biotype 2 (strain ATCC 23457).